A 305-amino-acid polypeptide reads, in one-letter code: GS homeobox 2 (305 aa).

Disordered regions lie at residues 115 to 151 (DAQF…AAAA) and 259 to 305 (KKEG…ISPL). The segment covering 123-140 (SHAHHHHHPPQHHHHHHQ) has biased composition (basic residues). The segment covering 141–151 (PQQPGSAAAAA) has biased composition (low complexity). A DNA-binding region (homeobox) is located at residues 203 to 262 (GKRMRTAFTSTQLLELEREFSSNMYLSRLRRIEIATYLNLSEKQVKIWFQNRRVKHKKEG).

The protein belongs to the Antp homeobox family.

The protein localises to the nucleus. In terms of biological role, transcription factor that binds 5'-CNAATTAG-3' DNA sequence and regulates the expression of numerous genes including genes important for brain development. During telencephalic development, causes ventralization of pallial progenitors and, depending on the developmental stage, specifies different neuronal fates. At early stages, necessary and sufficient to correctly specify the ventral lateral ganglionic eminence (LGE) and its major derivatives, the striatal projection neurons. At later stages, may specify LGE progenitors toward dorsal LGE fates, including olfactory bulb interneurons. The sequence is that of GS homeobox 2 (Gsx2) from Mus musculus (Mouse).